The following is a 211-amino-acid chain: MADDELETYRLWRIRKTVLQMVHDRGYLVAQEELDQPLETFKETFGDRPSEKKPARSDLTILVAHNDDPADQMFVFFPEDTKIGIKTIKAICQQMQEQNISRAIIVVQTGMTPSAKQSIGDMAPKYMLEHFLEAELMVNITEHELVPEHVVMTAEEKAELLARYKLKDSQLPRIQQCDPVARYFGLRRGQVVKIIRPSETAGRYITYRLVV.

Belongs to the archaeal Rpo5/eukaryotic RPB5 RNA polymerase subunit family. As to quaternary structure, component of the RNA polymerase I (Pol I), RNA polymerase II (Pol II) and RNA polymerase III (Pol III) complexes consisting of at least 13, 12 and 17 subunits, respectively. In RNA Pol II, this subunit is present in 2-fold molar excess over the other subunits.

The protein localises to the nucleus. Its function is as follows. DNA-dependent RNA polymerase catalyzes the transcription of DNA into RNA using the four ribonucleoside triphosphates as substrates. Common component of RNA polymerases I, II and III which synthesize ribosomal RNA precursors, mRNA precursors and many functional non-coding RNAs, and small RNAs, such as 5S rRNA and tRNAs, respectively. Pol II is the central component of the basal RNA polymerase II transcription machinery. Pols are composed of mobile elements that move relative to each other. In Pol II, RPB5 is part of the lower jaw surrounding the central large cleft and thought to grab the incoming DNA template. Seems to be the major component in this process. The polypeptide is DNA-directed RNA polymerases I, II, and III subunit RPABC1 (Caenorhabditis briggsae).